Here is a 483-residue protein sequence, read N- to C-terminus: Macrophage receptor MARCO (483 aa).

Residues 1–48 (MGNKKALKEEAFLGSAEEGADFDQAMFPVMETFEINDPMPKKRNWGSF) are Cytoplasmic-facing. Residues 49–69 (CTAVMAIHLILLTAGTTLLTL) traverse the membrane as a helical; Signal-anchor for type II membrane protein segment. The Extracellular segment spans residues 70 to 483 (KVLSLQKWIL…HNEDAGVECR (414 aa)). 2 N-linked (GlcNAc...) asparagine glycosylation sites follow: Asn-85 and Asn-137. Residues 146–386 (RIKGERGSPG…GEKGEKGQSF (241 aa)) form a disordered region. Positions 148–383 (KGERGSPGIP…GQKGEKGEKG (236 aa)) constitute a Collagen-like domain. Positions 153–166 (SPGIPGLQGPPGIK) are enriched in low complexity. Positions 193–216 (KGSKGDKGLIGPKGEHGTKGDKGD) are enriched in basic and acidic residues. Low complexity predominate over residues 273-286 (VPGTPGAAGPSGAK). Residues 376 to 386 (KGEKGEKGQSF) show a composition bias toward basic and acidic residues. The SRCR domain occupies 389–483 (VRIVGGTNRG…HNEDAGVECR (95 aa)). Disulfide bonds link Cys-412-Cys-472, Cys-425-Cys-482, and Cys-452-Cys-462.

As to quaternary structure, homotrimer; disulfide-linked. Trimers may assemble in larger oligomers thus resulting in the creation of a large surface capable of interacting with very large ligands. In terms of processing, N-glycosylated. In terms of tissue distribution, expressed in alveolar macrophages, macrophages of lymph node sinues, and Kupffer cells in liver (at protein level).

The protein resides in the cell membrane. Functionally, pattern recognition receptor (PRR) which binds Gram-positive and Gram-negative bacteria. Also plays a role in binding of unopsonized particles by alveolar macrophages. Binds to the secretoglobin SCGB3A2. In Mesocricetus auratus (Golden hamster), this protein is Macrophage receptor MARCO (MARCO).